The sequence spans 301 residues: Transmembrane protein 178A (301 aa).

Positions 1 to 25 (MEKRALVTAISLSMSLLALMLLVTA) are cleaved as a signal peptide. The Extracellular segment spans residues 26–183 (IFTDHWYETD…LLHLRRITAG (158 aa)). N162 is a glycosylation site (N-linked (GlcNAc...) asparagine). A helical transmembrane segment spans residues 184-204 (FLGMAAAVMLCGSIVAAVGFF). Residues 205 to 215 (WEESLTQHVSG) are Cytoplasmic-facing. A helical transmembrane segment spans residues 216-236 (LLFLMAGIFCTISLCTYAASV). Residues 237-258 (SYDLSRNPPFIYGLPSDVDHGY) are Extracellular-facing. Residues 259–279 (GWSIFCAWVSLGLTVASGCIC) traverse the membrane as a helical segment. At 280-301 (TTYPFLSRTKALRSKTARESSV) the chain is on the cytoplasmic side.

Belongs to the TMEM178 family.

It localises to the endoplasmic reticulum membrane. May act as a negative regulator of osteoclast differentiation. The protein is Transmembrane protein 178A (tmem178a) of Danio rerio (Zebrafish).